The chain runs to 622 residues: Iron transport multicopper oxidase FET5 (622 aa).

A signal peptide spans methionine 1–alanine 18. The Extracellular portion of the chain corresponds to lysine 19–leucine 573. Residue asparagine 24 is glycosylated (N-linked (GlcNAc...) asparagine). Plastocyanin-like domains are found at residues isoleucine 43–histidine 146 and asparagine 192–arginine 301. Histidine 79 and histidine 81 together coordinate Cu cation. 2 N-linked (GlcNAc...) asparagine glycosylation sites follow: asparagine 86 and asparagine 115. Residues histidine 128 and histidine 130 each contribute to the Cu cation site. N-linked (GlcNAc...) asparagine glycans are attached at residues asparagine 196, asparagine 200, asparagine 246, asparagine 295, and asparagine 364. The Plastocyanin-like 3 domain occupies glycine 392–alanine 514. Residues histidine 418, histidine 421, and histidine 423 each contribute to the Cu cation site. The N-linked (GlcNAc...) asparagine glycan is linked to asparagine 455. 4 residues coordinate Cu cation: histidine 496, cysteine 497, histidine 498, and histidine 502. Residues alanine 574–isoleucine 594 form a helical membrane-spanning segment. Residues glycine 595–glycine 622 are Cytoplasmic-facing.

The protein belongs to the multicopper oxidase family. In terms of assembly, interacts with FTH1. Cu cation serves as cofactor.

The protein resides in the cell membrane. Iron transport multicopper oxidase, which is required for Fe(2+) high affinity uptake. May be required to oxidize Fe(2+) and release it from the transporter. Essential component of copper-dependent iron transport. The chain is Iron transport multicopper oxidase FET5 (FET5) from Saccharomyces cerevisiae (strain ATCC 204508 / S288c) (Baker's yeast).